The primary structure comprises 448 residues: Receptor homology region, transmembrane domain- and RING domain-containing protein 2 (448 aa).

The signal sequence occupies residues 1–20 (MNRALVLLLYVCTVSCLASS). Topologically, residues 21 to 163 (KVILMRNNIT…IPSFENSAWS (143 aa)) are lumenal. Residues asparagine 28 and asparagine 74 are each glycosylated (N-linked (GlcNAc...) asparagine). In terms of domain architecture, PA spans 60–144 (DACQNLMNKP…ETGEVLKEYA (85 aa)). A disulfide bond links cysteine 62 and cysteine 87. A helical transmembrane segment spans residues 164-184 (IMAVSFISLLAMSAVLATCFF). The Cytoplasmic segment spans residues 185-448 (VRRHRIRRRT…YASANSLPDC (264 aa)). An RING-type; atypical zinc finger spans residues 232–274 (CAICLEDYTVGDKLRLLPCCHKFHAACVDSWLTSWRTFCPVCK). The segment covering 344-378 (QSSSNRRSPPISVSRSSVDLRQQAASPSPSPSQRS) has biased composition (low complexity). 2 disordered regions span residues 344–380 (QSSS…RSYI) and 402–424 (MSPY…NYPL). A compositionally biased stretch (polar residues) spans 408 to 423 (SPSNASPAMAGSSNYP).

The protein resides in the protein storage vacuole membrane. The protein localises to the golgi apparatus membrane. Functionally, involved in the trafficking of vacuolar proteins. May function as a sorting receptor for protein trafficking to the protein storage vacuole (PSV). In Arabidopsis thaliana (Mouse-ear cress), this protein is Receptor homology region, transmembrane domain- and RING domain-containing protein 2 (RMR2).